The primary structure comprises 251 residues: Aquaporin (251 aa).

At Met-1–Ser-11 the chain is on the cytoplasmic side. The chain crosses the membrane as a helical span at residues Leu-12 to Gly-32. The Extracellular portion of the chain corresponds to Ser-33–Lys-42. The helical transmembrane segment at Val-43–Val-63 threads the bilayer. Residues Thr-64–Cys-86 lie on the Cytoplasmic side of the membrane. Positions Asn-69–Ala-71 match the NPA motif. The chain crosses the membrane as a helical span at residues Gly-87–Val-107. Residues Cys-108–Asn-133 are Extracellular-facing. Residues Val-134–Val-154 form a helical membrane-spanning segment. The Cytoplasmic portion of the chain corresponds to Asn-155 to Arg-179. The chain crosses the membrane as a helical span at residues Ile-180–Thr-200. Over Ser-201–Trp-224 the chain is Extracellular. The NPG motif lies at Asn-206 to Gly-208. Residues Leu-225–Leu-245 form a helical membrane-spanning segment. Residues Tyr-246–Asn-251 lie on the Cytoplasmic side of the membrane.

The protein belongs to the MIP/aquaporin (TC 1.A.8) family.

It localises to the cell membrane. Its function is as follows. Water channel required to facilitate the transport of water across membranes. Involved in osmotolerance. This is Aquaporin (AQP) from Encephalitozoon hellem (Microsporidian parasite).